The following is a 166-amino-acid chain: MILFRHMEINIIVKPPFKKLVSAQFLKKIASETLKAQAADPSSELGIVITGQEEIKELNCKYRQLDEPTDVLSFYMLEENPENLTAPDDFPTPPDEATHLGEVIISYPQAELQAGAAGHSVNHELAFLLIHGVLHLLGYDHHETAAEAVMKSHQDIAMKHIREILE.

Zn(2+) is bound by residues His131, His135, and His141.

The protein belongs to the endoribonuclease YbeY family. The cofactor is Zn(2+).

Its subcellular location is the cytoplasm. Single strand-specific metallo-endoribonuclease involved in late-stage 70S ribosome quality control and in maturation of the 3' terminus of the 16S rRNA. This is Endoribonuclease YbeY from Dehalococcoides mccartyi (strain CBDB1).